Consider the following 249-residue polypeptide: 2,3-bisphosphoglycerate-dependent phosphoglycerate mutase (249 aa).

Residues 11 to 18, 24 to 25, R63, 90 to 93, K101, 117 to 118, and 185 to 186 each bind substrate; these read RHGNSEWN, TG, ERHY, RR, and GN. H12 serves as the catalytic Tele-phosphohistidine intermediate. The active-site Proton donor/acceptor is E90.

This sequence belongs to the phosphoglycerate mutase family. BPG-dependent PGAM subfamily.

The enzyme catalyses (2R)-2-phosphoglycerate = (2R)-3-phosphoglycerate. The protein operates within carbohydrate degradation; glycolysis; pyruvate from D-glyceraldehyde 3-phosphate: step 3/5. Functionally, catalyzes the interconversion of 2-phosphoglycerate and 3-phosphoglycerate. The chain is 2,3-bisphosphoglycerate-dependent phosphoglycerate mutase from Leifsonia xyli subsp. xyli (strain CTCB07).